A 91-amino-acid polypeptide reads, in one-letter code: C-C motif chemokine 5 (91 aa).

A signal peptide spans 1–23; that stretch reads MKVFAAALAVILATATFCTPASA. Disulfide bonds link Cys-33/Cys-57 and Cys-34/Cys-73.

The protein belongs to the intercrine beta (chemokine CC) family.

It localises to the secreted. Functionally, chemoattractant for blood monocytes, memory T-helper cells and eosinophils. Causes the release of histamine from basophils and activates eosinophils. May activate several chemokine receptors including CCR1, CCR3, CCR4 and CCR5. May also be an agonist of the G protein-coupled receptor GPR75. Together with GPR75, may play a role in neuron survival through activation of a downstream signaling pathway involving the PI3, Akt and MAP kinases. By activating GPR75 may also play a role in insulin secretion by islet cells. The polypeptide is C-C motif chemokine 5 (CCL5) (Equus caballus (Horse)).